A 281-amino-acid chain; its full sequence is Pantothenate synthetase (281 aa).

30-37 (MGYLHEGH) contributes to the ATP binding site. Catalysis depends on His37, which acts as the Proton donor. Gln61 lines the (R)-pantoate pocket. Gln61 is a beta-alanine binding site. 147 to 150 (GEKD) lines the ATP pocket. A (R)-pantoate-binding site is contributed by Gln153. ATP is bound by residues Ile176 and 184–187 (KSSR).

This sequence belongs to the pantothenate synthetase family. As to quaternary structure, homodimer.

The protein resides in the cytoplasm. The enzyme catalyses (R)-pantoate + beta-alanine + ATP = (R)-pantothenate + AMP + diphosphate + H(+). It participates in cofactor biosynthesis; (R)-pantothenate biosynthesis; (R)-pantothenate from (R)-pantoate and beta-alanine: step 1/1. Catalyzes the condensation of pantoate with beta-alanine in an ATP-dependent reaction via a pantoyl-adenylate intermediate. This Clostridium botulinum (strain ATCC 19397 / Type A) protein is Pantothenate synthetase.